The chain runs to 349 residues: UDP-N-acetylenolpyruvoylglucosamine reductase (349 aa).

Residues 26-197 (FDARARVAAR…VAVTFRLPKA (172 aa)) form the FAD-binding PCMH-type domain. Arg173 is a catalytic residue. Ser249 serves as the catalytic Proton donor. Glu345 is an active-site residue.

It belongs to the MurB family. Requires FAD as cofactor.

Its subcellular location is the cytoplasm. The enzyme catalyses UDP-N-acetyl-alpha-D-muramate + NADP(+) = UDP-N-acetyl-3-O-(1-carboxyvinyl)-alpha-D-glucosamine + NADPH + H(+). The protein operates within cell wall biogenesis; peptidoglycan biosynthesis. In terms of biological role, cell wall formation. This chain is UDP-N-acetylenolpyruvoylglucosamine reductase, found in Burkholderia pseudomallei (strain K96243).